A 513-amino-acid chain; its full sequence is MVEEVQKHSVHTLVFRSLKRTHDMFVADNGKPVPLDEESHKRKMAIKLRNEYGPVLHMPTSKENLKEKGPQNATDSYPHKQYPANQGQDVEYLVTGTHPYPAGPGVALTADTKIQRMPSESAAQSLAVALPSQTRVDANRTGPAGSEYRHPGASDRSQPTAMNSIMETGNTKNSALMAKKAPTMPKPQWHPPWKLYRVISGHLGWVRCIAVEPGNQWFVTGSADRTIKIWDLASGKLKLSLTGHISTVRGVIVSTRSPYLFSCGEDKQVKCWDLEYNKVIRHYHGHLSAVYGLDLHPTLDVLVTCSRDSTARIWDVRTKASVHTLSGHTNAVATVRCQAAEPQIITGSHDTTIRLWDLVAGKTRVTLTNHKKSVRAVVLHPLLYTFASGSPDNIKQWKFPDGGFIQNLSGHNAIINTLAVNADGVLVSGADNGTMHLWDWRTGYNFQRVHAAVQPGSLDSESGIFACAFDRSESRLLTAEADKTIKVYREDETATEETHPVSWKPEIIKRKRF.

Methionine 1 carries the post-translational modification N-acetylmethionine. The disordered stretch occupies residues 60–79; it reads TSKENLKEKGPQNATDSYPH. Position 119 is a phosphoserine (serine 119). Positions 136–160 are disordered; the sequence is VDANRTGPAGSEYRHPGASDRSQPT. Serine 200 is subject to Phosphoserine. 7 WD repeats span residues 201–240, 243–282, 285–324, 327–366, 369–409, 410–448, and 459–498; these read GHLGWVRCIAVEPGNQWFVTGSADRTIKIWDLASGKLKLS, GHISTVRGVIVSTRSPYLFSCGEDKQVKCWDLEYNKVIRH, GHLSAVYGLDLHPTLDVLVTCSRDSTARIWDVRTKASVHT, GHTNAVATVRCQAAEPQIITGSHDTTIRLWDLVAGKTRVT, NHKK…QNLS, GHNAIINTLAVNADGVLVSGADNGTMHLWDWRTGYNFQR, and DSESGIFACAFDRSESRLLTAEADKTIKVYREDETATEET. A Phosphoserine modification is found at serine 390.

This sequence belongs to the WD repeat PRL1/PRL2 family. As to quaternary structure, identified in the spliceosome C complex. Component of the PRP19-CDC5L splicing complex composed of a core complex comprising a homotetramer of PRPF19, CDC5L, PLRG1 and BCAS2, and at least three less stably associated proteins CTNNBL1, CWC15 and HSPA8. Interacts (via its WD40 repeat domain) directly with CDC5L (via its C-terminal); the interaction is required for mRNA splicing but not for spliceosome assembly. Component of the minor spliceosome, which splices U12-type introns. Within this complex, interacts with CRIPT. Also interacts directly in the complex with BCAS2 and PRPF19. Interacts with USB1.

It localises to the nucleus. Its subcellular location is the nucleus speckle. Its function is as follows. Involved in pre-mRNA splicing as component of the spliceosome. Component of the PRP19-CDC5L complex that forms an integral part of the spliceosome and is required for activating pre-mRNA splicing. As a component of the minor spliceosome, involved in the splicing of U12-type introns in pre-mRNAs. The protein is Pleiotropic regulator 1 (Plrg1) of Mus musculus (Mouse).